A 500-amino-acid chain; its full sequence is L-arabinose isomerase (500 aa).

Glu306, Glu333, His350, and His450 together coordinate Mn(2+).

The protein belongs to the arabinose isomerase family. In terms of assembly, homohexamer. Requires Mn(2+) as cofactor.

The catalysed reaction is beta-L-arabinopyranose = L-ribulose. The protein operates within carbohydrate degradation; L-arabinose degradation via L-ribulose; D-xylulose 5-phosphate from L-arabinose (bacterial route): step 1/3. Its function is as follows. Catalyzes the conversion of L-arabinose to L-ribulose. In Yersinia enterocolitica serotype O:8 / biotype 1B (strain NCTC 13174 / 8081), this protein is L-arabinose isomerase.